The primary structure comprises 404 residues: Probable tRNA sulfurtransferase (404 aa).

The region spanning 60-165 (HEVAESLKEI…DEAAYISYED (106 aa)) is the THUMP domain. ATP is bound by residues 183–184 (ML), 208–209 (HF), arginine 265, glycine 287, and glutamine 296.

The protein belongs to the ThiI family.

The protein localises to the cytoplasm. The catalysed reaction is [ThiI sulfur-carrier protein]-S-sulfanyl-L-cysteine + a uridine in tRNA + 2 reduced [2Fe-2S]-[ferredoxin] + ATP + H(+) = [ThiI sulfur-carrier protein]-L-cysteine + a 4-thiouridine in tRNA + 2 oxidized [2Fe-2S]-[ferredoxin] + AMP + diphosphate. It catalyses the reaction [ThiS sulfur-carrier protein]-C-terminal Gly-Gly-AMP + S-sulfanyl-L-cysteinyl-[cysteine desulfurase] + AH2 = [ThiS sulfur-carrier protein]-C-terminal-Gly-aminoethanethioate + L-cysteinyl-[cysteine desulfurase] + A + AMP + 2 H(+). It participates in cofactor biosynthesis; thiamine diphosphate biosynthesis. Catalyzes the ATP-dependent transfer of a sulfur to tRNA to produce 4-thiouridine in position 8 of tRNAs, which functions as a near-UV photosensor. Also catalyzes the transfer of sulfur to the sulfur carrier protein ThiS, forming ThiS-thiocarboxylate. This is a step in the synthesis of thiazole, in the thiamine biosynthesis pathway. The sulfur is donated as persulfide by IscS. The sequence is that of Probable tRNA sulfurtransferase from Streptococcus agalactiae serotype V (strain ATCC BAA-611 / 2603 V/R).